The sequence spans 143 residues: Cell division protein SepF (143 aa).

This sequence belongs to the SepF family. Homodimer. Interacts with FtsZ.

It localises to the cytoplasm. In terms of biological role, cell division protein that is part of the divisome complex and is recruited early to the Z-ring. Probably stimulates Z-ring formation, perhaps through the cross-linking of FtsZ protofilaments. Its function overlaps with FtsA. The polypeptide is Cell division protein SepF (Geobacillus thermodenitrificans (strain NG80-2)).